Reading from the N-terminus, the 126-residue chain is Large-conductance mechanosensitive channel (126 aa).

Helical transmembrane passes span 14-34 and 69-89; these read VLDLAVGVIIGGAFTGIVKSL and GAFLNDVINFLITAFVVFLLV.

This sequence belongs to the MscL family. As to quaternary structure, homopentamer.

It is found in the cell membrane. In terms of biological role, channel that opens in response to stretch forces in the membrane lipid bilayer. May participate in the regulation of osmotic pressure changes within the cell. The protein is Large-conductance mechanosensitive channel of Leuconostoc citreum (strain KM20).